The chain runs to 272 residues: Indole-3-glycerol phosphate synthase (272 aa).

This sequence belongs to the TrpC family.

It carries out the reaction 1-(2-carboxyphenylamino)-1-deoxy-D-ribulose 5-phosphate + H(+) = (1S,2R)-1-C-(indol-3-yl)glycerol 3-phosphate + CO2 + H2O. It participates in amino-acid biosynthesis; L-tryptophan biosynthesis; L-tryptophan from chorismate: step 4/5. This is Indole-3-glycerol phosphate synthase from Mycobacteroides abscessus (strain ATCC 19977 / DSM 44196 / CCUG 20993 / CIP 104536 / JCM 13569 / NCTC 13031 / TMC 1543 / L948) (Mycobacterium abscessus).